The chain runs to 618 residues: Paraneoplastic antigen-like protein 5 (618 aa).

Positions 390–399 (AGEEGQRKES) are enriched in basic and acidic residues. 3 disordered regions span residues 390 to 409 (AGEEGQRKESGFWAESEPDE), 451 to 475 (RDTLTKSWGSPDKGTGDMSVAEGQQ), and 519 to 549 (SMITRPQGNPDRSWDTSGSQDGEDGCSELRM).

This sequence belongs to the PNMA family. As to expression, restricted to testis, where expression is low. Not detected in the brain.

Its subcellular location is the nucleus. This chain is Paraneoplastic antigen-like protein 5 (Pnma5), found in Mus musculus (Mouse).